Reading from the N-terminus, the 122-residue chain is Putative syntaxin 6 (122 aa).

Topologically, residues 1–100 (MSNYRYSKLN…AKLTHLEDES (100 aa)) are cytoplasmic. A t-SNARE coiled-coil homology domain is found at 31 to 93 (EQIIQEQDDE…DTAMKKMAKL (63 aa)). Residues 101–121 (SQCKMIMVLSALLFFLVFVLL) form a helical; Anchor for type IV membrane protein membrane-spanning segment. A topological domain (extracellular) is located at residue Val122.

The protein belongs to the syntaxin family.

Its subcellular location is the membrane. SNARE promoting movement of transport vesicles to target membranes. Potentially functions in retrograde trafficking and in the endocytic recycling pathway. The sequence is that of Putative syntaxin 6 (syx-6) from Caenorhabditis elegans.